A 692-amino-acid chain; its full sequence is Sulfhydryl oxidase 2 (692 aa).

Residues 1 to 38 form the signal peptide; sequence MAAARAVARDPGAYARQPPSLRAARLPRLLFLLAVVAA. Residues 54 to 172 enclose the Thioredoxin domain; it reads SDAVWLLDSG…RQTMIDFLQN (119 aa). N-linked (GlcNAc...) asparagine glycosylation is present at Asn-71. Residues Cys-85 and Cys-88 each act as nucleophile in the active site. 2 disulfides stabilise this stretch: Cys-85/Cys-88 and Cys-116/Cys-125. N-linked (GlcNAc...) asparagine glycosylation is found at Asn-172, Asn-212, and Asn-260. Cys-412 and Cys-424 are joined by a disulfide. The 110-residue stretch at 415 to 524 folds into the ERV/ALR sulfhydryl oxidase domain; it reads SRLELRGYPC…EDPKFPKVPW (110 aa). Residues Arg-420, Trp-427, His-431, Glu-472, His-476, 499–506, Lys-521, and Trp-524 contribute to the FAD site; that span reads WRKHNMVN. Cysteines 470 and 473 form a disulfide. Cys-530 and Cys-533 are disulfide-bonded. Positions 568–607 are disordered; that stretch reads DQGSPGEWEAQGREQEEGKGLNPSGKSWRHHDTGSLRPPH. Residues 577 to 586 show a composition bias toward basic and acidic residues; sequence AQGREQEEGK. Residues 656-676 traverse the membrane as a helical segment; sequence SLCVVLYVASSLFLMIMYFFF.

It belongs to the quiescin-sulfhydryl oxidase (QSOX) family. It depends on FAD as a cofactor.

It is found in the membrane. It catalyses the reaction 2 R'C(R)SH + O2 = R'C(R)S-S(R)CR' + H2O2. Catalyzes the oxidation of sulfhydryl groups in peptide and protein thiols to disulfides with the reduction of oxygen to hydrogen peroxide. May contribute to disulfide bond formation in a variety of secreted proteins. This chain is Sulfhydryl oxidase 2 (Qsox2), found in Mus musculus (Mouse).